A 272-amino-acid polypeptide reads, in one-letter code: Cytochrome c oxidase subunit 3 (272 aa).

The next 7 membrane-spanning stretches (helical) occupy residues P23–M43, A45–F65, F91–F111, W137–C157, S169–Y189, A210–I230, and A249–W269.

The protein belongs to the cytochrome c oxidase subunit 3 family. As to quaternary structure, component of the cytochrome c oxidase (complex IV, CIV), a multisubunit enzyme composed of a catalytic core of 3 subunits and several supernumerary subunits. The complex exists as a monomer or a dimer and forms supercomplexes (SCs) in the inner mitochondrial membrane with ubiquinol-cytochrome c oxidoreductase (cytochrome b-c1 complex, complex III, CIII).

The protein resides in the mitochondrion inner membrane. The enzyme catalyses 4 Fe(II)-[cytochrome c] + O2 + 8 H(+)(in) = 4 Fe(III)-[cytochrome c] + 2 H2O + 4 H(+)(out). Functionally, component of the cytochrome c oxidase, the last enzyme in the mitochondrial electron transport chain which drives oxidative phosphorylation. The respiratory chain contains 3 multisubunit complexes succinate dehydrogenase (complex II, CII), ubiquinol-cytochrome c oxidoreductase (cytochrome b-c1 complex, complex III, CIII) and cytochrome c oxidase (complex IV, CIV), that cooperate to transfer electrons derived from NADH and succinate to molecular oxygen, creating an electrochemical gradient over the inner membrane that drives transmembrane transport and the ATP synthase. Cytochrome c oxidase is the component of the respiratory chain that catalyzes the reduction of oxygen to water. Electrons originating from reduced cytochrome c in the intermembrane space (IMS) are transferred via the dinuclear copper A center (CU(A)) of subunit 2 and heme A of subunit 1 to the active site in subunit 1, a binuclear center (BNC) formed by heme A3 and copper B (CU(B)). The BNC reduces molecular oxygen to 2 water molecules using 4 electrons from cytochrome c in the IMS and 4 protons from the mitochondrial matrix. This chain is Cytochrome c oxidase subunit 3 (COX3), found in Chondrus crispus (Carrageen Irish moss).